Consider the following 354-residue polypeptide: Hyaluronan and proteoglycan link protein 1 (354 aa).

Residues 1-9 (MRSLLFLVL) constitute a propeptide that is removed on maturation. The 115-residue stretch at 38-152 (PRLLVEAEQA…EGLEDDTAVV (115 aa)) folds into the Ig-like V-type domain. A glycan (N-linked (GlcNAc...) asparagine) is linked at asparagine 56. 5 cysteine pairs are disulfide-bonded: cysteine 61–cysteine 139, cysteine 181–cysteine 252, cysteine 205–cysteine 226, cysteine 279–cysteine 349, and cysteine 304–cysteine 325. 2 Link domains span residues 159-254 (VVFP…FCFT) and 259-351 (GRFY…YCFR).

This sequence belongs to the HAPLN family.

The protein resides in the secreted. Its subcellular location is the extracellular space. It is found in the extracellular matrix. Its function is as follows. Stabilizes the aggregates of proteoglycan monomers with hyaluronic acid in the extracellular cartilage matrix. The chain is Hyaluronan and proteoglycan link protein 1 (Hapln1) from Rattus norvegicus (Rat).